Reading from the N-terminus, the 234-residue chain is Multicopy suppressor of SEC21 protein 28 (234 aa).

The Cytoplasmic portion of the chain corresponds to 1-47 (MQTPPESTDVKLDTLNEPSAHLIEKNVALPKDIFRSYLSYWIYEIAR). Thr3 is subject to Phosphothreonine. A helical transmembrane segment spans residues 48-68 (YTPVMILSLVIGVLVLLIIFF). At 69 to 72 (NDNE) the chain is on the extracellular side. The helical transmembrane segment at 73-93 (ACVFNSAIFAFTSLVGLLIIL) threads the bilayer. Residues 94–234 (SDGNPKLVSR…NIDALLKKTE (141 aa)) are Cytoplasmic-facing. The tract at residues 231–234 (KKTE) is COPI binding.

The protein belongs to the DUP/COS family. In terms of assembly, interacts with MST27. Binds to coatomer proteins of COPI and SEC23/SEC24 of COPII coated vesicles.

It localises to the endoplasmic reticulum. The protein localises to the golgi apparatus. It is found in the cytoplasmic vesicle. Its subcellular location is the COPI-coated vesicle membrane. The protein resides in the COPII-coated vesicle membrane. Its function is as follows. Involved in protein trafficking vesicle formation, probably by stabilizing of coatomer at the Golgi membrane and thus allowing the efficient formation of COPI coated vesicles. This Saccharomyces cerevisiae (strain ATCC 204508 / S288c) (Baker's yeast) protein is Multicopy suppressor of SEC21 protein 28 (MST28).